Consider the following 158-residue polypeptide: Transcription elongation factor GreA (158 aa).

The protein belongs to the GreA/GreB family.

Its function is as follows. Necessary for efficient RNA polymerase transcription elongation past template-encoded arresting sites. The arresting sites in DNA have the property of trapping a certain fraction of elongating RNA polymerases that pass through, resulting in locked ternary complexes. Cleavage of the nascent transcript by cleavage factors such as GreA or GreB allows the resumption of elongation from the new 3'terminus. GreA releases sequences of 2 to 3 nucleotides. The chain is Transcription elongation factor GreA from Zymomonas mobilis subsp. mobilis (strain ATCC 31821 / ZM4 / CP4).